The chain runs to 429 residues: Histidine--tRNA ligase (429 aa).

It belongs to the class-II aminoacyl-tRNA synthetase family. As to quaternary structure, homodimer.

The protein localises to the cytoplasm. The catalysed reaction is tRNA(His) + L-histidine + ATP = L-histidyl-tRNA(His) + AMP + diphosphate + H(+). In Pseudomonas putida (strain GB-1), this protein is Histidine--tRNA ligase.